The chain runs to 763 residues: ATP-dependent RNA helicase glh-1 (763 aa).

The tract at residues 1 to 30 (MSDGWSDSESAAKAKTGFGSGGGFGGGNNG) is disordered. A compositionally biased stretch (gly residues) spans 18 to 30 (FGSGGGFGGGNNG). 7 tandem repeats follow at residues 24 to 33 (FGGGNNGGSG), 34 to 43 (FGGGKNGGTG), 44 to 53 (FGGGNTGGSG), 54 to 63 (FGGGNTGGSG), 64 to 73 (FGGGKTGGSG), 74 to 83 (FGGGNTCGSG), and 84 to 93 (FGGGSTGGSP). Residues 24–93 (FGGGNNGGSG…FGGGSTGGSP (70 aa)) are 7 X 10 AA tandem repeats, Gly-rich. CCHC-type zinc fingers lie at residues 158–175 (NNCF…DCPE) and 183–200 (RVCY…ECTE). Residues 193–230 (HTSRECTEERKPREGRTGGFGGGAGFGNNGGNDGFGGD) form a disordered region. Positions 194 to 208 (TSRECTEERKPREGR) are enriched in basic and acidic residues. The span at 209–230 (TGGFGGGAGFGNNGGNDGFGGD) shows a compositional bias: gly residues. CCHC-type zinc fingers lie at residues 242–259 (MKCF…ECPE) and 262–279 (RGCF…ECPN). The Q motif signature appears at 341 to 369 (KTFAEANLTETMQKNVAHAGYSKTTPIQQ). One can recognise a Helicase ATP-binding domain in the interval 372 to 556 (LPLVHQGYDI…RAFLRENYVM (185 aa)). 385 to 392 (AQTGSGKT) is an ATP binding site. Positions 423–427 (ILTPT) match the Phosphodegron motif. The short motif at 499–502 (DEAD) is the DEAD box element. Positions 592–739 (DIDSYTTEKS…IVPDWMQGAA (148 aa)) constitute a Helicase C-terminal domain.

This sequence belongs to the DEAD box helicase family. DDX4/VASA subfamily. As to quaternary structure, interacts with csn-5; this may prevent glh-1 degradation induced by kgb-1. Interacts with zyx-1. Interacts (via the N-terminal region containing the four CCHC zinc fingers) with pan-1. Interacts with kgb-1; this may promote glh-1 degradation by the proteasome. Phosphorylated by kgb-1 (in vitro); this may be responsible for its degradation by the proteasome.

The protein resides in the cytoplasm. The protein localises to the cytoplasmic granule. Its subcellular location is the perinuclear region. The enzyme catalyses ATP + H2O = ADP + phosphate + H(+). Functionally, probable ATP-binding RNA helicase. May act redundantly with the P-granule component glh-4 to regulate the formation of the granular structure of P-granules in embryos. Plays a role in positively regulating the localization of pgl-1 to P-granules. May play a role in transgenerational epigenetic inheritance. May protect somatic cells from excessive apoptosis during normal development. In Caenorhabditis elegans, this protein is ATP-dependent RNA helicase glh-1.